Consider the following 307-residue polypeptide: Thiamine-monophosphate kinase (307 aa).

Mg(2+) contacts are provided by Asp-26, Thr-37, Thr-38, and Asp-39. Residue His-46 coordinates substrate. Residues Asp-68 and Asp-117 each coordinate Mg(2+). ATP is bound by residues 116-117 and Arg-140; that span reads GD. Asp-207 contributes to the Mg(2+) binding site. Position 209 (Thr-209) interacts with ATP. Asp-210 is a Mg(2+) binding site. The substrate site is built by Glu-254 and Phe-304.

It belongs to the thiamine-monophosphate kinase family.

It carries out the reaction thiamine phosphate + ATP = thiamine diphosphate + ADP. The protein operates within cofactor biosynthesis; thiamine diphosphate biosynthesis; thiamine diphosphate from thiamine phosphate: step 1/1. Its function is as follows. Catalyzes the ATP-dependent phosphorylation of thiamine-monophosphate (TMP) to form thiamine-pyrophosphate (TPP), the active form of vitamin B1. The polypeptide is Thiamine-monophosphate kinase (Leptospira interrogans serogroup Icterohaemorrhagiae serovar Lai (strain 56601)).